The following is an 817-amino-acid chain: DNA-directed RNA polymerase subunit beta'' (817 aa).

Zn(2+) contacts are provided by C219, C291, C298, and C301.

This sequence belongs to the RNA polymerase beta' chain family. RpoC2 subfamily. As to quaternary structure, in plastids the minimal PEP RNA polymerase catalytic core is composed of four subunits: alpha, beta, beta', and beta''. When a (nuclear-encoded) sigma factor is associated with the core the holoenzyme is formed, which can initiate transcription. Zn(2+) is required as a cofactor.

It localises to the plastid. It carries out the reaction RNA(n) + a ribonucleoside 5'-triphosphate = RNA(n+1) + diphosphate. DNA-dependent RNA polymerase catalyzes the transcription of DNA into RNA using the four ribonucleoside triphosphates as substrates. This chain is DNA-directed RNA polymerase subunit beta'' (rpoC2), found in Euglena longa (Euglenophycean alga).